The sequence spans 139 residues: Cystatin-11 (139 aa).

A signal peptide spans Met1 to Arg28. Cystine bridges form between Cys94/Cys102 and Cys115/Cys135. The N-linked (GlcNAc...) asparagine glycan is linked to Asn134.

Belongs to the cystatin family.

It localises to the secreted. In terms of biological role, has antibacterial activity against the Gram-negative bacteria E.coli. May play a role in sperm maturation and fertilization. The chain is Cystatin-11 (Cst11) from Rattus norvegicus (Rat).